The following is a 290-amino-acid chain: Small ribosomal subunit biogenesis GTPase RsgA (290 aa).

The CP-type G domain maps to 62-213 (KNSLVRPPIV…IADTPGFSSL (152 aa)). Residues 111–114 (SKTD) and 156–164 (GQTGVGKTT) each bind GTP. Residues cysteine 237, cysteine 242, histidine 244, and cysteine 250 each contribute to the Zn(2+) site.

The protein belongs to the TRAFAC class YlqF/YawG GTPase family. RsgA subfamily. As to quaternary structure, monomer. Associates with 30S ribosomal subunit, binds 16S rRNA. Zn(2+) serves as cofactor.

Its subcellular location is the cytoplasm. Its function is as follows. One of several proteins that assist in the late maturation steps of the functional core of the 30S ribosomal subunit. Helps release RbfA from mature subunits. May play a role in the assembly of ribosomal proteins into the subunit. Circularly permuted GTPase that catalyzes slow GTP hydrolysis, GTPase activity is stimulated by the 30S ribosomal subunit. The polypeptide is Small ribosomal subunit biogenesis GTPase RsgA (Streptococcus mutans serotype c (strain ATCC 700610 / UA159)).